The following is a 204-amino-acid chain: Thymidylate kinase (204 aa).

7–14 (GGEGVGKT) is an ATP binding site.

This sequence belongs to the thymidylate kinase family.

The catalysed reaction is dTMP + ATP = dTDP + ADP. In terms of biological role, phosphorylation of dTMP to form dTDP in both de novo and salvage pathways of dTTP synthesis. This chain is Thymidylate kinase, found in Synechococcus sp. (strain JA-3-3Ab) (Cyanobacteria bacterium Yellowstone A-Prime).